The chain runs to 806 residues: Ankyrin repeat, bromo and BTB domain-containing protein DDB_G0293800 (806 aa).

ANK repeat units follow at residues 1 to 30 (MSNKTLPYCCEHGLKDEVIALLAKGEDVNQ), 34 to 63 (SNRYPLHYAAIGGYIEIVAMLLERGALVNC), 67 to 96 (RGATPLHYASRGGRIECIQLLIDNKADVNC), 100 to 130 (AGSTPLHTALQCNETKCAIALIETFGADVNL), and 134 to 163 (EGSTALHLASARGLVPVIVALLENGARADV). Residues 210–228 (GVGKKEDDDNNMKIDKQES) are compositionally biased toward basic and acidic residues. Residues 210–231 (GVGKKEDDDNNMKIDKQESEQQ) are disordered. The BTB domain occupies 239–307 (SDITFLIENQ…IYTGSIEKFE (69 aa)). Disordered stretches follow at residues 423–517 (TRTA…SDSM) and 621–743 (QNFP…EERR). Low complexity-rich tracts occupy residues 426–436 (ANANASNSNQS) and 443–511 (TSTT…SSSS). Positions 516-622 (SMNEKNLTFC…NAFDQKFLQN (107 aa)) constitute a Bromo domain. Over residues 626-641 (EKPPTYKPPPPTPTPI) the composition is skewed to pro residues. A compositionally biased stretch (low complexity) spans 642-658 (PTQQQQQQSTSSTSTPT). A compositionally biased stretch (basic and acidic residues) spans 666 to 675 (DEHVKVKEDT). Positions 676 to 693 (NSAQPTSSSSNHTNGENA) are enriched in polar residues. Low complexity predominate over residues 694–733 (SSSSSSSSSKQSNNNNNNNNNNNSNSTTNSSSSSSSTTTT). An NET domain is found at 727–806 (SSSTTTTQKK…ECFKKQKQDE (80 aa)).

The polypeptide is Ankyrin repeat, bromo and BTB domain-containing protein DDB_G0293800 (Dictyostelium discoideum (Social amoeba)).